We begin with the raw amino-acid sequence, 308 residues long: GTPase Era (308 aa).

The region spanning 14 to 181 (RCGFVALIGA…RSTLAEMVPP (168 aa)) is the Era-type G domain. A G1 region spans residues 22–29 (GAPNVGKS). 22–29 (GAPNVGKS) lines the GTP pocket. Residues 48–52 (QTTRA) are G2. Residues 69-72 (DTPG) form a G3 region. Residues 69–73 (DTPGI) and 131–134 (NKVD) each bind GTP. The tract at residues 131 to 134 (NKVD) is G4. Residues 160–162 (IAA) form a G5 region. One can recognise a KH type-2 domain in the interval 212-289 (LHQELPYQST…HLFLFVKVRE (78 aa)).

The protein belongs to the TRAFAC class TrmE-Era-EngA-EngB-Septin-like GTPase superfamily. Era GTPase family. In terms of assembly, monomer.

Its subcellular location is the cytoplasm. It localises to the cell inner membrane. An essential GTPase that binds both GDP and GTP, with rapid nucleotide exchange. Plays a role in 16S rRNA processing and 30S ribosomal subunit biogenesis and possibly also in cell cycle regulation and energy metabolism. This is GTPase Era from Bradyrhizobium diazoefficiens (strain JCM 10833 / BCRC 13528 / IAM 13628 / NBRC 14792 / USDA 110).